A 253-amino-acid polypeptide reads, in one-letter code: Sulfate transporter CysZ (253 aa).

The next 4 membrane-spanning stretches (helical) occupy residues 31 to 51 (FVIL…WWLF), 75 to 95 (LLWP…FSTI), 151 to 171 (IVLL…PVLW), and 222 to 242 (IPLL…AMWV).

It belongs to the CysZ family.

The protein localises to the cell inner membrane. Its function is as follows. High affinity, high specificity proton-dependent sulfate transporter, which mediates sulfate uptake. Provides the sulfur source for the cysteine synthesis pathway. This chain is Sulfate transporter CysZ, found in Escherichia coli O8 (strain IAI1).